Reading from the N-terminus, the 600-residue chain is MKKLKVTLLASSVVLAAALLSACGSNQNSSTSTKKLKAGNFDVAYQNPDKAIKGGNLKIAYQSDSPMKAEWLAPLSDDATFGSMSSPGGGQDGLFFTNSSFKYINGGPANVSLYKDAKTATITLRKDLKWSDGSEVTAKDYEFSYDLTANPAYGSDRWTDSLANIVGLSDYHAGKAKTISGITFPDGENGKVIKVQFKEMTPGMNQTGNGYFLETVAPYQYLKDVAPKDLASSPKSTTKPLVTGPFKPENVVAGESIKYVPNPYYWGEKPKLNSITYEIVSTAKSVAALSAHKYDYINDMRASQYKQVKDVKGYKVLGQQELYISLMYYNLGHYDVKKSISVQDRKTPLQDQNVREALGYARNVAAVQAKFSNGLATPANGLIPPIFKEFTSPSVKGYEKQDLDKANKLLDEDGWKLNKSTGYREKDGKELSLVYAARVGDANSETIAQNYIQQWKKIGVKVSLYHGKLMEFNSWVDHMTTPPGSDDWDITDGAWSLSGEPSQQDLFSAAAPYNFGHFNDPEITKDLNDIDSTKAEDSTYRKAAFIKYQEDMNKKAYVVPTAYAINYTPVNKRVVGMTLDYGAMNTWSEIGVSSDKMATK.

The first 22 residues, 1–22 (MKKLKVTLLASSVVLAAALLSA), serve as a signal peptide directing secretion. Cys23 is lipidated: N-palmitoyl cysteine. Residue Cys23 is the site of S-diacylglycerol cysteine attachment.

Belongs to the bacterial solute-binding protein 5 family. The complex is composed of two ATP-binding proteins (OppD and OppF), two transmembrane proteins (OppB and OppC) and a solute-binding protein (OppA).

The protein resides in the cell membrane. In terms of biological role, part of the ABC transporter complex OppABCDF involved in the uptake of oligopeptides. This Lactococcus lactis subsp. lactis (strain IL1403) (Streptococcus lactis) protein is Oligopeptide-binding protein OppA (oppA).